The sequence spans 403 residues: Casein kinase II subunit alpha-2 (403 aa).

The signal sequence occupies residues 1 to 31 (MHLIFFFSYFLRRYLLLLCAILILRAPLAHS). Positions 104–389 (YEVVRKVGRG…AKEAMAHPYF (286 aa)) constitute a Protein kinase domain. ATP contacts are provided by residues 110-118 (VGRGKYSEV) and K133. An N-linked (GlcNAc...) asparagine glycan is attached at N182. D221 acts as the Proton acceptor in catalysis.

It belongs to the protein kinase superfamily. Ser/Thr protein kinase family. CK2 subfamily. As to quaternary structure, heterotetramer of two catalytic alpha subunits and two regulatory beta subunits. In terms of tissue distribution, seems to be present in all plant organs. But seems to be more expressed than CKA1.

Its subcellular location is the nucleus. The protein resides in the nucleolus. It carries out the reaction L-seryl-[protein] + ATP = O-phospho-L-seryl-[protein] + ADP + H(+). It catalyses the reaction L-threonyl-[protein] + ATP = O-phospho-L-threonyl-[protein] + ADP + H(+). Casein kinases are operationally defined by their preferential utilization of acidic proteins such as caseins as substrates. The alpha chain contains the catalytic site. The tetrameric holoenzyme CK2, composed of two alpha and two beta subunits, phosphorylates the transcription factor PIF1 after an exposure to light, resulting in a proteasome-dependent degradation of PIF1 and promotion of photomorphogenesis. CK2 phosphorylates translation initiation factors. May participate in the regulation of the initiation of translation. Acts as circadian clock component that maintains the correct period length through phosphorylation of CCA1. May act as an ectokinase that phosphorylates several extracellular proteins. The polypeptide is Casein kinase II subunit alpha-2 (Arabidopsis thaliana (Mouse-ear cress)).